A 358-amino-acid polypeptide reads, in one-letter code: Peptide chain release factor 1 (358 aa).

Gln-233 is subject to N5-methylglutamine.

The protein belongs to the prokaryotic/mitochondrial release factor family. Post-translationally, methylated by PrmC. Methylation increases the termination efficiency of RF1.

The protein resides in the cytoplasm. Peptide chain release factor 1 directs the termination of translation in response to the peptide chain termination codons UAG and UAA. The protein is Peptide chain release factor 1 of Geobacillus sp. (strain WCH70).